We begin with the raw amino-acid sequence, 233 residues long: MAIQHRDPRGGGGSRDARTNRRIKAREVRVIGAEGEQLGVLPIDQALARAQELGMDLVEVSPMAKPPVCKIMDYGRFKYLEKKKQNEAKKKQVVVQLKEVKLRPRTEEHDYDTKIKKVREFLAEANKARITVMFRGREMSHRELGQKVLQRVIEDLRDVAVIESAPRMEGRQMFMILAPNPKMLQSQRDKAKAAAAAAPAAAPAAPAAGAPAPAPAPAAPAPAPAAADPAAQR.

2 disordered regions span residues 1 to 21 (MAIQ…RTNR) and 184 to 233 (LQSQ…AAQR). A compositionally biased stretch (low complexity) spans 193-211 (AAAAAAPAAAPAAPAAGAP). Positions 212-223 (APAPAPAAPAPA) are enriched in pro residues. The segment covering 224–233 (PAAADPAAQR) has biased composition (low complexity).

This sequence belongs to the IF-3 family. In terms of assembly, monomer.

The protein resides in the cytoplasm. IF-3 binds to the 30S ribosomal subunit and shifts the equilibrium between 70S ribosomes and their 50S and 30S subunits in favor of the free subunits, thus enhancing the availability of 30S subunits on which protein synthesis initiation begins. The polypeptide is Translation initiation factor IF-3 (Anaeromyxobacter dehalogenans (strain 2CP-C)).